A 229-amino-acid chain; its full sequence is Flagellar calcium-binding protein TB-1.7G (229 aa).

The interval 1–25 (GSKNASNPKDGAASKGGKDGKTTAD) is disordered. Basic and acidic residues predominate over residues 16-25 (GGKDGKTTAD). EF-hand domains lie at 44-79 (ESKS…ILKL), 80-115 (DEFT…LVEF), 126-161 (YDIF…LKEW), and 163-198 (VDIT…KKLQ). Positions 57, 59, 61, 63, and 68 each coordinate Ca(2+). 8 residues coordinate Ca(2+): Asp-139, Asp-141, Ser-143, Glu-150, Asp-176, Asn-178, Ser-180, and Glu-187. The disordered stretch occupies residues 202–229 (DPDDEENGANEGDGANAGDGVPAAEGSA). The span at 210 to 221 (ANEGDGANAGDG) shows a compositional bias: low complexity.

The protein belongs to the calflagin family.

The protein localises to the cell projection. It is found in the cilium. Its subcellular location is the flagellum. May contribute to the rapid motility of the trypanosomes, playing a role either in flagellar structure or in calcium metabolism. Could alternate between a GDP-bound inactive form to a calcium/GTP-bound active form. In Trypanosoma brucei brucei, this protein is Flagellar calcium-binding protein TB-1.7G.